The following is a 173-amino-acid chain: Co-chaperone protein HscB homolog (173 aa).

In terms of domain architecture, J spans Asn-2–Leu-74.

It belongs to the HscB family. As to quaternary structure, interacts with HscA and stimulates its ATPase activity.

In terms of biological role, co-chaperone involved in the maturation of iron-sulfur cluster-containing proteins. Seems to help targeting proteins to be folded toward HscA. This Shewanella loihica (strain ATCC BAA-1088 / PV-4) protein is Co-chaperone protein HscB homolog.